The primary structure comprises 429 residues: Transcriptional adapter 3 (429 aa).

A coiled-coil region spans residues 41-70; that stretch reads IEELDTLQLELETLLSSASRRLRALEEQRQ. Disordered stretches follow at residues 86–132, 208–257, and 274–308; these read KLEK…TKVQ, EERR…PFGP, and PMEDSPIPDIPGKDDGAGTSPRSQGKAFSVPHTRS. 2 stretches are compositionally biased toward basic and acidic residues: residues 208–221 and 230–249; these read EERREGARANDKKK and LDAKDVDALLKKSESQHEPP. The stretch at 364 to 404 forms a coiled coil; sequence LLKLAREEMRKQELRQRVRVADNEVMEAFRRIMAARQKKRT.

The protein belongs to the NGG1 family.

It is found in the nucleus. Functions as a component of the PCAF complex. The PCAF complex is capable of efficiently acetylating histones in a nucleosomal context. The protein is Transcriptional adapter 3 (tada3) of Danio rerio (Zebrafish).